The primary structure comprises 798 residues: Acetamidase regulatory protein (798 aa).

Residues 20–50 (CVHCHRRKVRCDARLVGLPCSNCRSAGKTDC) constitute a DNA-binding region (zn(2)-C6 fungal-type). 3 disordered regions span residues 68-96 (VPIRCRPPNPEEAPKPISSLSPSSEPPNA), 115-172 (ANRV…ESRA), and 632-714 (LRTT…TLSA). 2 stretches are compositionally biased toward low complexity: residues 82–94 (KPISSLSPSSEPP) and 133–147 (TRSNNNSGNNTQYQN). Residues 632–641 (LRTTTSDRPR) are compositionally biased toward basic and acidic residues. The segment covering 644–663 (SNLSNNSTNSPASQQKNTSG) has biased composition (polar residues). Residues 678-687 (PSAPSIPPLQ) are compositionally biased toward pro residues.

The protein resides in the nucleus. In terms of biological role, positively regulates the expression of 5 genes involved in the catabolism of certain amides (amdS), omega amino acids (gatA and gabA), and lactams (lamA and lamB) in the presence of omega amino acid inducers. The protein is Acetamidase regulatory protein (amdR) of Emericella nidulans (strain FGSC A4 / ATCC 38163 / CBS 112.46 / NRRL 194 / M139) (Aspergillus nidulans).